The primary structure comprises 339 residues: Leucine-rich repeat-containing protein 59 (339 aa).

Topologically, residues 1 to 282 (MARGGGKSGS…KHSWSRSVLR (282 aa)) are cytoplasmic. LRR repeat units follow at residues 10–31 (SLKDKLDGNELDLSLCGLSEVP), 40–61 (KATVLDLSCNSLVSLPSDFCSL), 63–84 (HLVKLDLSKNRLQQLPVDFGRL), and 86–107 (SLQHLDLLNNRLVTLPVSFAQL). Residues 181–254 (MKVIQSEQDR…EMEKKTKKET (74 aa)) are a coiled coil. The disordered stretch occupies residues 186-275 (SEQDRERQRK…PPQPARHKHS (90 aa)). Basic and acidic residues predominate over residues 187 to 256 (EQDRERQRKL…EKKTKKETVQ (70 aa)). Residues 283–300 (ALLLVLLCILCTLAVCKL) traverse the membrane as a helical segment. Residues 301 to 339 (TELQHQPLCVSVNTLYEDVVAAVQNHKTLQNMLQQNSQQ) lie on the Lumenal side of the membrane.

Interacts with SGO1.

It localises to the microsome membrane. The protein resides in the endoplasmic reticulum membrane. The protein localises to the nucleus envelope. Functionally, required for nuclear import of FGF1. This Gallus gallus (Chicken) protein is Leucine-rich repeat-containing protein 59 (LRRC59).